A 735-amino-acid polypeptide reads, in one-letter code: Transmembrane channel-like protein 7 (735 aa).

Residues 1–164 (MSEFGAGAEL…QSYFSFLRFL (164 aa)) lie on the Extracellular side of the membrane. The chain crosses the membrane as a helical span at residues 165–185 (VLLNFLMFILMFSFVTLPAVI). The Cytoplasmic portion of the chain corresponds to 186–233 (SNYGIFNSSSTKISPNNTEPYCTVYTPSGNKGLVYFYTYLKDLLTGTG). Residues 234–254 (FLEVTVLFYGYYTIDAAWFSV) traverse the membrane as a helical segment. The Extracellular segment spans residues 255 to 258 (LRYN). Residues 259-279 (LPLAYLLTTFAYLALSFVWII) form a helical membrane-spanning segment. Residues 280-355 (KRSVERFRQH…TMKEKLQIYS (76 aa)) lie on the Cytoplasmic side of the membrane. Residues 356-376 (LRIFINIIVIAVLSGCFYSIY) traverse the membrane as a helical segment. The Extracellular portion of the chain corresponds to 377-403 (RATVFSQENSSVSIRRNVMIANLLVQY). Asn385 carries an N-linked (GlcNAc...) asparagine glycan. The chain crosses the membrane as a helical span at residues 404–424 (LPSIVITSANFIAPQIFSFLI). Residues 425–436 (RFEDYSAAFEIR) lie on the Cytoplasmic side of the membrane. The helical transmembrane segment at 437-457 (LTLIRCVFVRLANVGVLLFSL) threads the bilayer. The Extracellular portion of the chain corresponds to 458-488 (WSQIHCDNDQCKACGYDYELYPCWESAVGQE). The chain crosses the membrane as a helical span at residues 489–509 (MYKLLIFDFMIIIAMTLFVDF). Residues 510-548 (PRKLLVTYCSWKLVQWWGLQEFGISDNVLEIIYGQTICW) are Cytoplasmic-facing. A helical transmembrane segment spans residues 549 to 569 (IGTFFSPLLPAIATIKYFIIF). At 570–594 (YIKKISLIHTRKPASRPIRASSSNF) the chain is on the extracellular side. A helical transmembrane segment spans residues 595–615 (FFLAVLLIGLILAFVPLGVSI). Residues 616 to 634 (ALISSSKACGPFRNFNTSW) lie on the Cytoplasmic side of the membrane. Residues 635-655 (AIVPYTILEFPIGLQKFLYGI) form a helical membrane-spanning segment. Over 656-658 (ASE) the chain is Extracellular. A helical membrane pass occupies residues 659–679 (AFAVPFFVIACLFMFYFIALA). Topologically, residues 680 to 735 (GAHKRVVEQLREQLVTESRDKLFLLEKLSEAQKNSGKPQKARKLTSSWLLEPLDKG) are cytoplasmic. The disordered stretch occupies residues 710 to 735 (AQKNSGKPQKARKLTSSWLLEPLDKG).

It belongs to the TMC family.

The protein resides in the membrane. Its function is as follows. Probable component of an ion channel. This Gallus gallus (Chicken) protein is Transmembrane channel-like protein 7 (Tmc7).